A 213-amino-acid polypeptide reads, in one-letter code: Uracil phosphoribosyltransferase (213 aa).

5-phospho-alpha-D-ribose 1-diphosphate-binding positions include Arg-77, Arg-102, and Asp-129–Ser-137. Uracil contacts are provided by residues Ile-198 and Gly-203 to Ala-205. Residue Asp-204 coordinates 5-phospho-alpha-D-ribose 1-diphosphate.

This sequence belongs to the UPRTase family. Mg(2+) is required as a cofactor.

The enzyme catalyses UMP + diphosphate = 5-phospho-alpha-D-ribose 1-diphosphate + uracil. Its pathway is pyrimidine metabolism; UMP biosynthesis via salvage pathway; UMP from uracil: step 1/1. Its activity is regulated as follows. Allosterically activated by GTP. In terms of biological role, catalyzes the conversion of uracil and 5-phospho-alpha-D-ribose 1-diphosphate (PRPP) to UMP and diphosphate. The sequence is that of Uracil phosphoribosyltransferase from Mycobacteroides abscessus (strain ATCC 19977 / DSM 44196 / CCUG 20993 / CIP 104536 / JCM 13569 / NCTC 13031 / TMC 1543 / L948) (Mycobacterium abscessus).